A 216-amino-acid chain; its full sequence is Ribosomal RNA small subunit methyltransferase G (216 aa).

Residues Gly-81, Phe-86, 130–131 (AE), and Arg-144 each bind S-adenosyl-L-methionine.

Belongs to the methyltransferase superfamily. RNA methyltransferase RsmG family.

It localises to the cytoplasm. It carries out the reaction guanosine(527) in 16S rRNA + S-adenosyl-L-methionine = N(7)-methylguanosine(527) in 16S rRNA + S-adenosyl-L-homocysteine. Its function is as follows. Specifically methylates the N7 position of guanine in position 527 of 16S rRNA. The polypeptide is Ribosomal RNA small subunit methyltransferase G (Rhodospirillum centenum (strain ATCC 51521 / SW)).